Here is a 523-residue protein sequence, read N- to C-terminus: Sensory neuron membrane protein 1 (523 aa).

Over 1 to 10 (MRLARGIKYA) the chain is Cytoplasmic. The chain crosses the membrane as a helical span at residues 11-31 (VIGAGVALFGVLFGWVMFPAI). Residues 32 to 458 (LKSQLKKEMA…NQLFIPKRIV (427 aa)) are Extracellular-facing. N67 and N229 each carry an N-linked (GlcNAc...) asparagine glycan. 3 disulfides stabilise this stretch: C268/C333, C297/C352, and C335/C341. A glycan (N-linked (GlcNAc...) asparagine) is linked at N440. Residues 459 to 479 (SVIRWWLLSFGMLAALGGVIF) traverse the membrane as a helical segment. Topologically, residues 480–523 (HFKDDIMRIAIKGDSSVTKVNPEDGEQKDVSVIGQSHEPPKINM) are cytoplasmic. Residues 499 to 523 (VNPEDGEQKDVSVIGQSHEPPKINM) form a disordered region.

Belongs to the CD36 family. In terms of tissue distribution, localizes to both male and female antennae but not the leg, wing, gut, head, or thoracic ganglia. Detected throughout the sensory epithelium, associating with both sex-pheromone sensilla and plant-volatile sensilla. Differentially expressed both among different sensilla and different neurons within a given sensillum. Expression coincides with that of several other olfactory-specific proteins that are involved in odor detection.

The protein resides in the cell membrane. Plays an olfactory role that is not restricted to pheromone sensitivity. This chain is Sensory neuron membrane protein 1, found in Manduca sexta (Tobacco hawkmoth).